We begin with the raw amino-acid sequence, 78 residues long: NAD(P)H-quinone oxidoreductase subunit L (78 aa).

2 helical membrane-spanning segments follow: residues 10-30 (LFVI…IPLG) and 48-68 (LLIY…APFL).

This sequence belongs to the complex I NdhL subunit family. As to quaternary structure, NDH-1 can be composed of about 15 different subunits; different subcomplexes with different compositions have been identified which probably have different functions.

It is found in the cellular thylakoid membrane. It carries out the reaction a plastoquinone + NADH + (n+1) H(+)(in) = a plastoquinol + NAD(+) + n H(+)(out). The enzyme catalyses a plastoquinone + NADPH + (n+1) H(+)(in) = a plastoquinol + NADP(+) + n H(+)(out). Its function is as follows. NDH-1 shuttles electrons from an unknown electron donor, via FMN and iron-sulfur (Fe-S) centers, to quinones in the respiratory and/or the photosynthetic chain. The immediate electron acceptor for the enzyme in this species is believed to be plastoquinone. Couples the redox reaction to proton translocation, and thus conserves the redox energy in a proton gradient. Cyanobacterial NDH-1 also plays a role in inorganic carbon-concentration. This Prochlorococcus marinus (strain SARG / CCMP1375 / SS120) protein is NAD(P)H-quinone oxidoreductase subunit L.